Here is a 480-residue protein sequence, read N- to C-terminus: Cyclin L homolog cyl-1 (480 aa).

Residues 25-58 (PKEQNGNVEPKKEEDEKFESTYKQNENTQITPSS) are disordered. Residues 33-44 (EPKKEEDEKFES) are compositionally biased toward basic and acidic residues. Residues 45–58 (TYKQNENTQITPSS) are compositionally biased toward polar residues. One can recognise a Cyclin N-terminal domain in the interval 91–230 (PSLVDGLSKE…RRILATLGFV (140 aa)). Residues 368–480 (KMAPDGEKST…ESSTPPRSRR (113 aa)) form a disordered region. 2 stretches are compositionally biased toward basic and acidic residues: residues 384 to 409 (KDSR…GKKE) and 418 to 442 (NDRD…DEKK). A compositionally biased stretch (basic residues) spans 443–453 (DRRKRTRSRSR). Residues 454-472 (DRKDKNRNRDVGKRYRKES) show a composition bias toward basic and acidic residues.

Belongs to the cyclin family.

In terms of biological role, involved in pre-mRNA splicing. Functions in association with cyclin-dependent kinases (CDKs). Involved in induction of expression of heat shock protein hsp-16.2 in response to heat shock. Plays a role in male tail development, perhaps acting together with cell cycle regulators cdc-25.2, cdk-1, cyb-3, and cyd-1. The protein is Cyclin L homolog cyl-1 of Caenorhabditis elegans.